A 341-amino-acid polypeptide reads, in one-letter code: 5-formaminoimidazole-4-carboxamide-1-(beta)-D-ribofuranosyl 5'-monophosphate synthetase (341 aa).

5-amino-1-(5-phospho-beta-D-ribosyl)imidazole-4-carboxamide is bound by residues H10 and T77. Residues 106-317 (DRSLKERLMR…YYGLLFDEPI (212 aa)) enclose the ATP-grasp domain. ATP-binding positions include 132–188 (DTLV…VLAY) and E210. Position 238 (N238) interacts with 5-amino-1-(5-phospho-beta-D-ribosyl)imidazole-4-carboxamide. Mg(2+)-binding residues include E277 and E290.

Belongs to the phosphohexose mutase family. It depends on Mg(2+) as a cofactor. Mn(2+) serves as cofactor.

The catalysed reaction is 5-amino-1-(5-phospho-beta-D-ribosyl)imidazole-4-carboxamide + formate + ATP = 5-formamido-1-(5-phospho-D-ribosyl)imidazole-4-carboxamide + ADP + phosphate. It participates in purine metabolism; IMP biosynthesis via de novo pathway; 5-formamido-1-(5-phospho-D-ribosyl)imidazole-4-carboxamide from 5-amino-1-(5-phospho-D-ribosyl)imidazole-4-carboxamide (formate route): step 1/1. Functionally, catalyzes the ATP- and formate-dependent formylation of 5-aminoimidazole-4-carboxamide-1-beta-d-ribofuranosyl 5'-monophosphate (AICAR) to 5-formaminoimidazole-4-carboxamide-1-beta-d-ribofuranosyl 5'-monophosphate (FAICAR) in the absence of folates. This chain is 5-formaminoimidazole-4-carboxamide-1-(beta)-D-ribofuranosyl 5'-monophosphate synthetase, found in Cenarchaeum symbiosum (strain A).